We begin with the raw amino-acid sequence, 236 residues long: Glyoxalase 3 (236 aa).

Catalysis depends on residues Cys136, His137, and Glu168. Cysteine sulfinic acid (-SO2H) is present on Cys136.

The protein belongs to the peptidase C56 family. HSP31-like subfamily. As to quaternary structure, monomer.

The enzyme catalyses methylglyoxal + H2O = (R)-lactate + H(+). Functionally, catalyzes the conversion of methylglyoxal (MG) to D-lactate in a single glutathione (GSH)-independent step. Selective for MG, does not use glyoxal as substrate. Plays a role in detoxifying endogenously produced MG, particularly when glycerol is the principal carbon source. Important for viability in stationary phase. This is Glyoxalase 3 from Candida albicans (strain SC5314 / ATCC MYA-2876) (Yeast).